Consider the following 394-residue polypeptide: Outer membrane protein S1 (394 aa).

The signal sequence occupies residues 1–21 (MNRKVLALLVPALLVAGAANA). The segment at 222-242 (SSSDRSDNQVARGYGDGMNER) is disordered.

This sequence belongs to the Gram-negative porin family. Homotrimer.

Its subcellular location is the cell outer membrane. In terms of biological role, forms pores that allow passive diffusion of small molecules across the outer membrane. In Salmonella typhi, this protein is Outer membrane protein S1 (ompS1).